A 178-amino-acid chain; its full sequence is Cell division protein ZapC (178 aa).

Belongs to the ZapC family. In terms of assembly, interacts directly with FtsZ.

The protein resides in the cytoplasm. Contributes to the efficiency of the cell division process by stabilizing the polymeric form of the cell division protein FtsZ. Acts by promoting interactions between FtsZ protofilaments and suppressing the GTPase activity of FtsZ. This chain is Cell division protein ZapC, found in Pseudoalteromonas atlantica (strain T6c / ATCC BAA-1087).